A 171-amino-acid chain; its full sequence is MEKANSFTKEQLVACGHGNLLGPNRPRLPVDNMLMIDRIITINEDGGAFGKGEIIAELDITPDLWFFDCHFISDPVMPGCLGLDAMWQLVGFFLGWEGAEGKGRALGVGEVKFTGQVLPDAKKVTYKLNIKRKIHRKLVMGIADATMEVDGRQIYSATDLKVGIFSDTSTF.

His-70 is a catalytic residue.

Belongs to the thioester dehydratase family. FabA subfamily. As to quaternary structure, homodimer.

Its subcellular location is the cytoplasm. The enzyme catalyses a (3R)-hydroxyacyl-[ACP] = a (2E)-enoyl-[ACP] + H2O. It carries out the reaction (3R)-hydroxydecanoyl-[ACP] = (2E)-decenoyl-[ACP] + H2O. The catalysed reaction is (2E)-decenoyl-[ACP] = (3Z)-decenoyl-[ACP]. The protein operates within lipid metabolism; fatty acid biosynthesis. Its function is as follows. Necessary for the introduction of cis unsaturation into fatty acids. Catalyzes the dehydration of (3R)-3-hydroxydecanoyl-ACP to E-(2)-decenoyl-ACP and then its isomerization to Z-(3)-decenoyl-ACP. Can catalyze the dehydratase reaction for beta-hydroxyacyl-ACPs with saturated chain lengths up to 16:0, being most active on intermediate chain length. This Shewanella frigidimarina (strain NCIMB 400) protein is 3-hydroxydecanoyl-[acyl-carrier-protein] dehydratase.